The chain runs to 1012 residues: MMAQSNMFTVADVLSQDELRKKLYQTFKDRGILDTLKTQLRNQLIHELMHPVLSGELQPRSISVEGSSLLIGASNSLVADHLQRCGYEYSLSVFFPESGLAKEKVFTMQDLLQLIKINPTSSLYKSLVSGSDKENQKGFLMHFLKELAEYHQAKESCNMETQTSSTFNRDSLAEKLQLIDDQFADAYPQRIKFESLEIKLNEYKREIEEQLRAEMCQKLKFFKDTEIAKIKMEAKKKYEKELTMFQNDFEKACQAKSEALVLREKSTLERIHKHQEIETKEIYAQRQLLLKDMDLLRGREAELKQRVEAFELNQKLQEEKHKSITEALRRQEQNIKSFEETYDRKLKNELLKYQLELKDDYIIRTNRLIEDERKNKEKAVHLQEELIAINSKKEELNQSVNRVKELELELESVKAQSLAITKQNHMLNEKVKEMSDYSLLKEEKLELLAQNKLLKQQLEESRNENLRLLNRLAQPAPELAVFQKELRKAEKAIVVEHEEFESCRQALHKQLQDEIEHSAQLKAQILGYKASVKSLTTQVADLKLQLKQTQTALENEVYCNPKQSVIDRSVNGLINGNVVPCNGEISGDFLNNPFKQENVLARMVASRITNYPTAWVEGSSPDSDLEFVANTKARVKELQQEAERLEKAFRSYHRRVIKNSAKSPLAAKSPPSLHLLEAFKNITSSSPERHIFGEDRVVSEQPQVGTLEERNDVVEALTGSAASRLRGGTSSRRLSSTPLPKAKRSLESEMYLEGLGRSHIASPSPCPDRMPLPSPTESRHSLSIPPVSSPPEQKVGLYRRQTELQDKSEFSDVDKLAFKDNEEFESSFESAGNMPRQLEMGGLSPAGDMSHVDAAAAAVPLSYQHPSVDQKQIEEQKEEEKIREQQVKERRQREERRQSNLQEVLERERRELEKLYQERKMIEESLKIKIKKELEMENELEMSNQEIKDKSAHSENPLEKYMKIIQQEQDQESADKSSKKMVQEGSLVDTLQSSDKVESLTGFSHEELDDSW.

Residues 70 to 102 (LIGASNSLVADHLQRCGYEYSLSVFFPESGLAK) form the LisH domain. Coiled-coil stretches lie at residues 189-557 (QRIK…ENEV) and 622-662 (DSDL…NSAK). The segment at 609 to 665 (TNYPTAWVEGSSPDSDLEFVANTKARVKELQQEAERLEKAFRSYHRRVIKNSAKSPL) is mediates homooligomerization. The mediates the interaction with SDCCAG8 stretch occupies residues 615–1012 (WVEGSSPDSD…FSHEELDDSW (398 aa)). Residues serine 663, serine 669, serine 686, and serine 720 each carry the phosphoserine modification. Residues 719–744 (GSAASRLRGGTSSRRLSSTPLPKAKR) are disordered. The span at 720–737 (SAASRLRGGTSSRRLSST) shows a compositional bias: low complexity. Position 735 is a phosphoserine; by PKA (serine 735). A phosphoserine mark is found at serine 745, serine 774, serine 789, and serine 811. The interval 757-794 (RSHIASPSPCPDRMPLPSPTESRHSLSIPPVSSPPEQK) is disordered. The segment covering 764-774 (SPCPDRMPLPS) has biased composition (pro residues). Disordered regions lie at residues 824 to 904 (FESS…LQEV) and 963 to 1012 (KIIQ…DDSW). Residues 867 to 956 (SVDQKQIEEQ…IKDKSAHSEN (90 aa)) adopt a coiled-coil conformation. 2 stretches are compositionally biased toward basic and acidic residues: residues 871–904 (KQIE…LQEV) and 973–982 (SADKSSKKMV).

This sequence belongs to the OFD1 family. In terms of assembly, homooligomer. Interacts with LCA5. Interacts with RUVBL1; the interaction is direct and may mediate interaction with the NuA4 histone acetyltransferase complex. Interacts with SDCCAG8; the interaction is direct. Interacts with MAP1LC3B. Interacts with C2CD3; OFD1 may act as a negative regulator of C2CD3. Forms a complex with KIAA0753/OFIP and CEP20/FOR20; the interaction with CEP20 is detected only in the presence of KIAA0753. Interacts with PCM1; this interaction may be mediated by KIAA0753/OFIP. Interacts with TBC1D31; regulates OFD1 activity in cilium assembly. Phosphorylated. Phosphorylation at Ser-735, by the cAMP-dependent protein kinase PKA, triggers ubiquitination and proteasomal degradation of OFD1. Also increases its interaction with TBC1D31 and regulates its function in ciliogenesis. Post-translationally, ubiquitinated by PJA2, upon phosphorylation at Ser-735 by PKA, leads to the proteasomal degradation of OFD1. Widely expressed. Expressed in 9 and 14 weeks old embryos in metanephric mesenchyme, oral mucosa, lung, heart, nasal and cranial cartilage, and brain. Expressed in metanephros, brain, tongue, and limb.

It localises to the cytoplasm. The protein resides in the cytoskeleton. The protein localises to the microtubule organizing center. It is found in the centrosome. Its subcellular location is the centriole. It localises to the cilium basal body. The protein resides in the nucleus. The protein localises to the centriolar satellite. Functionally, component of the centrioles controlling mother and daughter centrioles length. Recruits to the centriole IFT88 and centriole distal appendage-specific proteins including CEP164. Involved in the biogenesis of the cilium, a centriole-associated function. The cilium is a cell surface projection found in many vertebrate cells required to transduce signals important for development and tissue homeostasis. Plays an important role in development by regulating Wnt signaling and the specification of the left-right axis. Only OFD1 localized at the centriolar satellites is removed by autophagy, which is an important step in the ciliogenesis regulation. The protein is Centriole and centriolar satellite protein OFD1 (OFD1) of Homo sapiens (Human).